The sequence spans 286 residues: Shikimate dehydrogenase (NADP(+)) (286 aa).

Shikimate-binding positions include Ser20–Ser22 and Ser67. Residue Lys71 is the Proton acceptor of the active site. Residues Asn92 and Asp107 each coordinate shikimate. Residues Gly131–Ala135 and Ala230 contribute to the NADP(+) site. Tyr232 is a shikimate binding site. NADP(+) is bound at residue Gly253.

This sequence belongs to the shikimate dehydrogenase family. In terms of assembly, homodimer.

It carries out the reaction shikimate + NADP(+) = 3-dehydroshikimate + NADPH + H(+). The protein operates within metabolic intermediate biosynthesis; chorismate biosynthesis; chorismate from D-erythrose 4-phosphate and phosphoenolpyruvate: step 4/7. In terms of biological role, involved in the biosynthesis of the chorismate, which leads to the biosynthesis of aromatic amino acids. Catalyzes the reversible NADPH linked reduction of 3-dehydroshikimate (DHSA) to yield shikimate (SA). The sequence is that of Shikimate dehydrogenase (NADP(+)) from Lactococcus lactis subsp. cremoris (strain MG1363).